The chain runs to 372 residues: Adaptive-response sensory kinase SasA (372 aa).

Residues 147 to 360 enclose the Histidine kinase domain; the sequence is MVAHELRTPL…CFHFTVPVWQ (214 aa). Histidine 150 carries the phosphohistidine; by autocatalysis modification.

In terms of assembly, homooligomerizes. Interacts with KaiC. Participates in the KaiBC complex, whose core is composed of a KaiC homohexamer and 6 KaiB.

The enzyme catalyses ATP + protein L-histidine = ADP + protein N-phospho-L-histidine.. Functionally, member of the two-component regulatory system SasA/RpaA involved in genome-wide circadian gene expression. One of several clock output pathways. Participates in the Kai clock protein complex, the main circadian regulator in cyanobacteria, via its interaction with KaiC. KaiC enhances the autophosphorylation activity of SasA, which then transfers its phosphate group to RpaA to activate it. In addition to its output function, recruits fold-shifted KaiB (KaiB(fs)) to KaiC to cooperatively form the KaiB(6):KaiC(6) complex (independent of SasA kinase activity). Required for robustness of the circadian rhythm of gene expression and is involved in clock output, also required for adaptation to light/dark cycles. The polypeptide is Adaptive-response sensory kinase SasA (Prochlorococcus marinus (strain MIT 9301)).